The sequence spans 546 residues: Elongator complex protein 3 (546 aa).

The Radical SAM core domain maps to 81-371 (RTASGIAVVA…YRVQRDIPMP (291 aa)). [4Fe-4S] cluster contacts are provided by C98, C108, and C111. Acetyl-CoA contacts are provided by residues K163, 473 to 476 (ELHV), 496 to 498 (FGM), and Y529. The region spanning 395–546 (TQCRDVRTRE…EGPYMVKRLQ (152 aa)) is the N-acetyltransferase domain.

It belongs to the ELP3 family. In terms of assembly, component of the elongator complex. [4Fe-4S] cluster is required as a cofactor.

It localises to the cytoplasm. The protein localises to the nucleus. The enzyme catalyses uridine(34) in tRNA + acetyl-CoA + S-adenosyl-L-methionine + H2O = 5-(carboxymethyl)uridine(34) in tRNA + 5'-deoxyadenosine + L-methionine + CoA + 2 H(+). The protein operates within tRNA modification; 5-methoxycarbonylmethyl-2-thiouridine-tRNA biosynthesis. In terms of biological role, catalytic tRNA acetyltransferase subunit of the elongator complex which is required for multiple tRNA modifications, including mcm5U (5-methoxycarbonylmethyl uridine), mcm5s2U (5-methoxycarbonylmethyl-2-thiouridine), and ncm5U (5-carbamoylmethyl uridine). In the elongator complex, acts as a tRNA uridine(34) acetyltransferase by mediating formation of carboxymethyluridine in the wobble base at position 34 in tRNAs. This Gallus gallus (Chicken) protein is Elongator complex protein 3.